Here is a 256-residue protein sequence, read N- to C-terminus: Ubiquinone/menaquinone biosynthesis C-methyltransferase UbiE (256 aa).

Residues Thr79, Asp100, and Asp128–Ala129 each bind S-adenosyl-L-methionine.

The protein belongs to the class I-like SAM-binding methyltransferase superfamily. MenG/UbiE family.

It catalyses the reaction a 2-demethylmenaquinol + S-adenosyl-L-methionine = a menaquinol + S-adenosyl-L-homocysteine + H(+). It carries out the reaction a 2-methoxy-6-(all-trans-polyprenyl)benzene-1,4-diol + S-adenosyl-L-methionine = a 5-methoxy-2-methyl-3-(all-trans-polyprenyl)benzene-1,4-diol + S-adenosyl-L-homocysteine + H(+). It participates in quinol/quinone metabolism; menaquinone biosynthesis; menaquinol from 1,4-dihydroxy-2-naphthoate: step 2/2. The protein operates within cofactor biosynthesis; ubiquinone biosynthesis. In terms of biological role, methyltransferase required for the conversion of demethylmenaquinol (DMKH2) to menaquinol (MKH2) and the conversion of 2-polyprenyl-6-methoxy-1,4-benzoquinol (DDMQH2) to 2-polyprenyl-3-methyl-6-methoxy-1,4-benzoquinol (DMQH2). The polypeptide is Ubiquinone/menaquinone biosynthesis C-methyltransferase UbiE (Pseudomonas fluorescens (strain Pf0-1)).